The sequence spans 365 residues: G-protein coupled receptor 68 (365 aa).

The Extracellular portion of the chain corresponds to 1-12 (MGNITADNSSMS). N-linked (GlcNAc...) asparagine glycans are attached at residues asparagine 3 and asparagine 8. A helical membrane pass occupies residues 13 to 49 (CTIDHTIHQTLAPVVYVTVLVVGFPANCLSLYFGYLQ). Cystine bridges form between cysteine 13–cysteine 258 and cysteine 94–cysteine 172. Over 50-53 (IKAR) the chain is Cytoplasmic. The helical transmembrane segment at 54 to 84 (NELGVYLCNLTVADLFYICSLPFWLQYVLQH) threads the bilayer. Over 85-89 (DNWSH) the chain is Extracellular. A helical transmembrane segment spans residues 90–125 (GDLSCQVCGILLYENIYISVGFLCCISVDRYLAVAH). Residues 126–133 (PFRFHQFR) are Cytoplasmic-facing. The chain crosses the membrane as a helical span at residues 134-160 (TLKAAVGVSVVIWAKELLTSIYFLMHE). Topologically, residues 161-176 (EVIEDENQHRVCFEHY) are extracellular. The tract at residues 161-176 (EVIEDENQHRVCFEHY) is extracellular loop 2 (ECL2). The helical transmembrane segment at 177–214 (PIQAWQRAINYYRFLVGFLFPICLLLASYQGILRAVRR) threads the bilayer. Residues 215–218 (SHGT) lie on the Cytoplasmic side of the membrane. Residues 219 to 254 (QKSRKDQIQRLVLSTVVIFLACFLPYHVLLLVRSVW) traverse the membrane as a helical segment. The Extracellular portion of the chain corresponds to 255-260 (EASCDF). A helical membrane pass occupies residues 261-289 (AKGVFNAYHFSLLLTSFNCVADPVLYCFV). Residues 290-365 (SETTHRDLAR…SGGFPTGRLA (76 aa)) lie on the Cytoplasmic side of the membrane. Residues 345–365 (HPAFQTPNSPGSGGFPTGRLA) are disordered. The span at 355-365 (GSGGFPTGRLA) shows a compositional bias: gly residues.

The protein belongs to the G-protein coupled receptor 1 family. In terms of tissue distribution, found at low level in a wide range of tissues, but significantly expressed in lung, kidney, bone and nervous system.

It is found in the cell membrane. Its activity is regulated as follows. Activated by a network of residues that connects an extracellular-facing cavity to Glu-149, a conserved charged residue buried in the transmembrane core of the receptor. Protonation likely drives conformational changes in extracellular loop 2 (ECL2), which stabilizes movement of transmembrane 3 (TM3) and a series of rearrangements that connect the extracellular-facing cavity to Glu-149, a residue only conserved in proton-sensing G-protein coupled receptors. Activated in an allosteric manner by divalent metal ions at the extracellular surface following the order: Cd(2+) &gt; Co(2+) &gt; Ni(2+) &gt; Zn(2+) &gt; Fe(2+) &gt; Ca(2+) &gt; Mg(2+). Activated by the benzodiazepine drug lorazepam, a non-selective GPR68 positive allosteric modulator. Activated by ogerin (ZINC67740571), a selective GPR68 positive allosteric modulator. Activated by small molecule MS48107, a selective positive allosteric modulator. Inhibited by small molecule ogremorphin, inducing ferroptosis in cancer cells. Its function is as follows. Proton-sensing G-protein coupled receptor activated by extracellular pH, which is required to monitor pH changes and generate adaptive reactions. The receptor is almost silent at pH 7.8 but fully activated at pH 6.8. Ligand binding causes a conformation change that triggers signaling via guanine nucleotide-binding proteins (G proteins) and modulates the activity of downstream effectors, such as phospholipase C. GPR68 is mainly coupled to G(q) G proteins and mediates production of diacylglycerol (DAG) and inositol 1,4,5-trisphosphate (IP3). Acts as a key mechanosensor of fluid shear stress and membrane stretch. Expressed in endothelial cells of small-diameter resistance arteries, where it mediates flow-induced dilation in response to shear stress. May represents an osteoblastic pH sensor regulating cell-mediated responses to acidosis in bone. Acts as a regulator of calcium-sensing receptor CASR in a seesaw manner: GPR68-mediated signaling inhibits CASR signaling in response to protons, while CASR inhibits GPR68 in presence of extracellular calcium. In Homo sapiens (Human), this protein is G-protein coupled receptor 68.